A 167-amino-acid chain; its full sequence is Ribosome maturation factor RimM (167 aa).

One can recognise a PRC barrel domain in the interval 94–165 (EHEYYYSDII…TIKITPMEGL (72 aa)).

This sequence belongs to the RimM family. As to quaternary structure, binds ribosomal protein uS19.

The protein resides in the cytoplasm. Its function is as follows. An accessory protein needed during the final step in the assembly of 30S ribosomal subunit, possibly for assembly of the head region. Essential for efficient processing of 16S rRNA. May be needed both before and after RbfA during the maturation of 16S rRNA. It has affinity for free ribosomal 30S subunits but not for 70S ribosomes. This chain is Ribosome maturation factor RimM, found in Staphylococcus epidermidis (strain ATCC 12228 / FDA PCI 1200).